Here is a 179-residue protein sequence, read N- to C-terminus: MAVRGINKVILVGRLGKDPEVRYIPNGGAVANLQVATSESWRDKQTGEMREQTEWHRVVLFGKLAEVAGECLRKGAQVYIEGQLRTRSWEDNGITRYVTEILVKTTGTMQMLVRAAGAQTQPEEGQQFSGQPQPEPQAEAGTKKGGAKTKGRGRKAAQPEPQPQPPEGDDYGFSDDIPF.

The region spanning 6-110 (INKVILVGRL…ILVKTTGTMQ (105 aa)) is the SSB domain. A DNA-binding region spans residues 55-61 (WHRVVLF). Residues 117 to 179 (GAQTQPEEGQ…DYGFSDDIPF (63 aa)) are disordered. Residues 118 to 132 (AQTQPEEGQQFSGQP) are compositionally biased toward polar residues. The span at 145–155 (GGAKTKGRGRK) shows a compositional bias: basic residues. A compositionally biased stretch (acidic residues) spans 167–179 (EGDDYGFSDDIPF).

In terms of assembly, homotetramer.

Functionally, may contribute to the conjugative processing of DNA. It has a functional relationship with Psi (plasmid-mediated sos inhibition) proteins. This chain is Plasmid-derived single-stranded DNA-binding protein (ssbF), found in Escherichia coli (strain K12).